Consider the following 379-residue polypeptide: UDP-4-amino-4-deoxy-L-arabinose--oxoglutarate aminotransferase (379 aa).

An N6-(pyridoxal phosphate)lysine modification is found at Lys182.

Belongs to the DegT/DnrJ/EryC1 family. ArnB subfamily. As to quaternary structure, homodimer. Requires pyridoxal 5'-phosphate as cofactor.

The enzyme catalyses UDP-4-amino-4-deoxy-beta-L-arabinose + 2-oxoglutarate = UDP-beta-L-threo-pentopyranos-4-ulose + L-glutamate. It participates in nucleotide-sugar biosynthesis; UDP-4-deoxy-4-formamido-beta-L-arabinose biosynthesis; UDP-4-deoxy-4-formamido-beta-L-arabinose from UDP-alpha-D-glucuronate: step 2/3. The protein operates within bacterial outer membrane biogenesis; lipopolysaccharide biosynthesis. Its function is as follows. Catalyzes the conversion of UDP-4-keto-arabinose (UDP-Ara4O) to UDP-4-amino-4-deoxy-L-arabinose (UDP-L-Ara4N). The modified arabinose is attached to lipid A and is required for resistance to polymyxin and cationic antimicrobial peptides. The protein is UDP-4-amino-4-deoxy-L-arabinose--oxoglutarate aminotransferase of Enterobacter sp. (strain 638).